The primary structure comprises 43 residues: MNITQYEKLKQHLSDEDTGPFTLNEFSFYMKEDDRYIHIPVFE.

This is an uncharacterized protein from Bacillus subtilis (strain 168).